Here is a 137-residue protein sequence, read N- to C-terminus: CUB domain-containing protein (137 aa).

A signal peptide spans 1–21 (MRLSRAFAWPLLCSIATTVKA). 2 cysteine pairs are disulfide-bonded: C30/C51 and C75/C96. One can recognise a CUB domain in the interval 30 to 132 (CGGHYTDEYG…TFFEIYYFVD (103 aa)).

This is CUB domain-containing protein from Homo sapiens (Human).